The primary structure comprises 353 residues: Photosystem II protein D1 (353 aa).

Position 2 is an N-acetylthreonine (Thr-2). Position 2 is a phosphothreonine (Thr-2). Transmembrane regions (helical) follow at residues Tyr-29 to Ser-46, His-118 to Leu-133, and Trp-142 to Ala-156. Chlorophyll a is bound at residue His-118. Tyr-126 is a pheophytin a binding site. Asp-170 and Glu-189 together coordinate [CaMn4O5] cluster. A helical transmembrane segment spans residues Phe-197–Leu-218. His-198 provides a ligand contact to chlorophyll a. A quinone-binding positions include His-215 and Ser-264–Phe-265. His-215 is a Fe cation binding site. His-272 contributes to the Fe cation binding site. A helical membrane pass occupies residues Phe-274 to Leu-288. Residues His-332, Glu-333, Asp-342, and Ala-344 each coordinate [CaMn4O5] cluster. A propeptide spanning residues Ala-345 to Gly-353 is cleaved from the precursor.

This sequence belongs to the reaction center PufL/M/PsbA/D family. As to quaternary structure, PSII is composed of 1 copy each of membrane proteins PsbA, PsbB, PsbC, PsbD, PsbE, PsbF, PsbH, PsbI, PsbJ, PsbK, PsbL, PsbM, PsbT, PsbX, PsbY, PsbZ, Psb30/Ycf12, at least 3 peripheral proteins of the oxygen-evolving complex and a large number of cofactors. It forms dimeric complexes. The D1/D2 heterodimer binds P680, chlorophylls that are the primary electron donor of PSII, and subsequent electron acceptors. It shares a non-heme iron and each subunit binds pheophytin, quinone, additional chlorophylls, carotenoids and lipids. D1 provides most of the ligands for the Mn4-Ca-O5 cluster of the oxygen-evolving complex (OEC). There is also a Cl(-1) ion associated with D1 and D2, which is required for oxygen evolution. The PSII complex binds additional chlorophylls, carotenoids and specific lipids. is required as a cofactor. Tyr-161 forms a radical intermediate that is referred to as redox-active TyrZ, YZ or Y-Z. Post-translationally, C-terminally processed by CTPA; processing is essential to allow assembly of the oxygen-evolving complex and thus photosynthetic growth.

It localises to the plastid. Its subcellular location is the chloroplast thylakoid membrane. The catalysed reaction is 2 a plastoquinone + 4 hnu + 2 H2O = 2 a plastoquinol + O2. Its function is as follows. Photosystem II (PSII) is a light-driven water:plastoquinone oxidoreductase that uses light energy to abstract electrons from H(2)O, generating O(2) and a proton gradient subsequently used for ATP formation. It consists of a core antenna complex that captures photons, and an electron transfer chain that converts photonic excitation into a charge separation. The D1/D2 (PsbA/PsbD) reaction center heterodimer binds P680, the primary electron donor of PSII as well as several subsequent electron acceptors. The polypeptide is Photosystem II protein D1 (Medicago sativa (Alfalfa)).